The following is a 239-amino-acid chain: Large ribosomal subunit protein uL2 (239 aa).

The interval P203–K239 is disordered. Residues P222–K239 are compositionally biased toward basic residues.

This sequence belongs to the universal ribosomal protein uL2 family. Part of the 50S ribosomal subunit. Forms a bridge to the 30S subunit in the 70S ribosome.

Functionally, one of the primary rRNA binding proteins. Required for association of the 30S and 50S subunits to form the 70S ribosome, for tRNA binding and peptide bond formation. It has been suggested to have peptidyltransferase activity; this is somewhat controversial. Makes several contacts with the 16S rRNA in the 70S ribosome. The chain is Large ribosomal subunit protein uL2 from Pyrococcus abyssi (strain GE5 / Orsay).